A 141-amino-acid chain; its full sequence is Large ribosomal subunit protein uL11 (141 aa).

Belongs to the universal ribosomal protein uL11 family. As to quaternary structure, part of the ribosomal stalk of the 50S ribosomal subunit. Interacts with L10 and the large rRNA to form the base of the stalk. L10 forms an elongated spine to which L12 dimers bind in a sequential fashion forming a multimeric L10(L12)X complex. One or more lysine residues are methylated.

Forms part of the ribosomal stalk which helps the ribosome interact with GTP-bound translation factors. The polypeptide is Large ribosomal subunit protein uL11 (Synechococcus sp. (strain WH7803)).